Consider the following 256-residue polypeptide: uncharacterized protein (256 aa).

Positions 1–22 are cleaved as a signal peptide; sequence MGYLKRIGMCISLLIVIIFVTS. Residue cysteine 23 is the site of N-palmitoyl cysteine attachment. Cysteine 23 is lipidated: S-diacylglycerol cysteine.

This sequence belongs to the staphylococcal tandem lipoprotein family.

Its subcellular location is the cell membrane. This is an uncharacterized protein from Staphylococcus aureus (strain MSSA476).